Here is a 275-residue protein sequence, read N- to C-terminus: NH(3)-dependent NAD(+) synthetase (275 aa).

50–57 (GISGGVDS) contacts ATP. Residue Asp56 coordinates Mg(2+). Arg147 lines the deamido-NAD(+) pocket. Thr167 serves as a coordination point for ATP. A Mg(2+)-binding site is contributed by Glu172. Residues Lys180 and Asp187 each coordinate deamido-NAD(+). ATP contacts are provided by Lys196 and Thr218. 267–268 (HK) contacts deamido-NAD(+).

This sequence belongs to the NAD synthetase family. In terms of assembly, homodimer.

The enzyme catalyses deamido-NAD(+) + NH4(+) + ATP = AMP + diphosphate + NAD(+) + H(+). The protein operates within cofactor biosynthesis; NAD(+) biosynthesis; NAD(+) from deamido-NAD(+) (ammonia route): step 1/1. In terms of biological role, catalyzes the ATP-dependent amidation of deamido-NAD to form NAD. Uses ammonia as a nitrogen source. This chain is NH(3)-dependent NAD(+) synthetase, found in Pseudomonas aeruginosa (strain UCBPP-PA14).